A 172-amino-acid chain; its full sequence is Ribosome maturation factor RimM (172 aa).

A PRC barrel domain is found at 94–167 (ENEFYLFQLK…FIKVELLPGM (74 aa)).

Belongs to the RimM family. As to quaternary structure, binds ribosomal protein uS19.

It is found in the cytoplasm. In terms of biological role, an accessory protein needed during the final step in the assembly of 30S ribosomal subunit, possibly for assembly of the head region. Essential for efficient processing of 16S rRNA. May be needed both before and after RbfA during the maturation of 16S rRNA. It has affinity for free ribosomal 30S subunits but not for 70S ribosomes. This chain is Ribosome maturation factor RimM, found in Carboxydothermus hydrogenoformans (strain ATCC BAA-161 / DSM 6008 / Z-2901).